A 173-amino-acid chain; its full sequence is Disulfide bond formation protein B (173 aa).

At 1–14 the chain is on the cytoplasmic side; sequence MIEFLRRIAAHRLA. A helical membrane pass occupies residues 15–31; sequence WGLLAASALFLELSALF. At 32–49 the chain is on the periplasmic side; that stretch reads FQYVLGLHPCVMCVYERL. A disulfide bond links C41 and C44. The helical transmembrane segment at 50-65 threads the bilayer; that stretch reads AILGVLSAGLLGMVAP. Topologically, residues 66-72 are cytoplasmic; that stretch reads EKWYLRW. The chain crosses the membrane as a helical span at residues 73–90; the sequence is SALLLWGYSAFRGLQLAL. At 91-145 the chain is on the periplasmic side; that stretch reads KHVDYQMNPSPFNVCSPFADFPSWAPLDQWLPWLFFPDGDCSEISWQFLSFSMPQ. Cysteines 105 and 131 form a disulfide. The chain crosses the membrane as a helical span at residues 146 to 164; the sequence is WLVAIFAAYLLVFVVVTIG. Residues 165–173 lie on the Cytoplasmic side of the membrane; that stretch reads NLVKGRCCS.

The protein belongs to the DsbB family.

It localises to the cell inner membrane. Its function is as follows. Required for disulfide bond formation in some periplasmic proteins. Acts by oxidizing the DsbA protein. The sequence is that of Disulfide bond formation protein B from Aeromonas salmonicida (strain A449).